Reading from the N-terminus, the 439-residue chain is 3-phosphoshikimate 1-carboxyvinyltransferase (439 aa).

The 3-phosphoshikimate site is built by K21, S22, and R26. Residue K21 coordinates phosphoenolpyruvate. Residues G94 and R122 each contribute to the phosphoenolpyruvate site. 3-phosphoshikimate-binding residues include S167, Q169, D320, and K347. Q169 serves as a coordination point for phosphoenolpyruvate. D320 serves as the catalytic Proton acceptor. Phosphoenolpyruvate is bound by residues R351 and R395.

It belongs to the EPSP synthase family. As to quaternary structure, monomer.

It localises to the cytoplasm. The catalysed reaction is 3-phosphoshikimate + phosphoenolpyruvate = 5-O-(1-carboxyvinyl)-3-phosphoshikimate + phosphate. It functions in the pathway metabolic intermediate biosynthesis; chorismate biosynthesis; chorismate from D-erythrose 4-phosphate and phosphoenolpyruvate: step 6/7. In terms of biological role, catalyzes the transfer of the enolpyruvyl moiety of phosphoenolpyruvate (PEP) to the 5-hydroxyl of shikimate-3-phosphate (S3P) to produce enolpyruvyl shikimate-3-phosphate and inorganic phosphate. This Hyphomonas neptunium (strain ATCC 15444) protein is 3-phosphoshikimate 1-carboxyvinyltransferase.